Here is a 460-residue protein sequence, read N- to C-terminus: SPbeta prophage-derived uncharacterized protein YopQ (460 aa).

The protein is SPbeta prophage-derived uncharacterized protein YopQ (yopQ) of Bacillus subtilis (strain 168).